The following is a 185-amino-acid chain: Large ribosomal subunit protein bL25 (185 aa).

The protein belongs to the bacterial ribosomal protein bL25 family. CTC subfamily. In terms of assembly, part of the 50S ribosomal subunit; part of the 5S rRNA/L5/L18/L25 subcomplex. Contacts the 5S rRNA. Binds to the 5S rRNA independently of L5 and L18.

Its function is as follows. This is one of the proteins that binds to the 5S RNA in the ribosome where it forms part of the central protuberance. This chain is Large ribosomal subunit protein bL25, found in Chlamydia trachomatis serovar A (strain ATCC VR-571B / DSM 19440 / HAR-13).